The sequence spans 686 residues: Rhophilin-2 (686 aa).

Residues 26 to 100 (NPLAQTGRSK…LEGLNISVGV (75 aa)) enclose the REM-1 domain. Residues 46 to 66 (QILKAVRMRTGAENLLKVATN) are interaction with Rho. The BRO1 domain occupies 111–460 (PLIPLGLKET…RLKYAQHQDD (350 aa)). Residues 515–593 (RSIHFTAEEG…DGVEMKVVSL (79 aa)) form the PDZ domain. Residue Thr655 is modified to Phosphothreonine.

This sequence belongs to the RHPN family. In terms of assembly, interacts with GTP-bound RhoA and RhoB. Interacts with both GTP- and GDP-bound RhoA. Interacts with KRT18. Mainly expressed in thyroid.

The protein localises to the cytoplasm. The protein resides in the perinuclear region. Its function is as follows. Binds specifically to GTP-Rho. May function in a Rho pathway to limit stress fiber formation and/or increase the turnover of F-actin structures in the absence of high levels of RhoA activity. This is Rhophilin-2 (RHPN2) from Canis lupus familiaris (Dog).